Here is a 431-residue protein sequence, read N- to C-terminus: Enolase (431 aa).

Gln167 contacts (2R)-2-phosphoglycerate. Catalysis depends on Glu209, which acts as the Proton donor. The Mg(2+) site is built by Asp246, Glu290, and Asp317. (2R)-2-phosphoglycerate-binding residues include Lys342, Arg371, Ser372, and Lys393. Residue Lys342 is the Proton acceptor of the active site.

It belongs to the enolase family. Component of the RNA degradosome, a multiprotein complex involved in RNA processing and mRNA degradation. It depends on Mg(2+) as a cofactor.

The protein localises to the cytoplasm. Its subcellular location is the secreted. The protein resides in the cell surface. It catalyses the reaction (2R)-2-phosphoglycerate = phosphoenolpyruvate + H2O. The protein operates within carbohydrate degradation; glycolysis; pyruvate from D-glyceraldehyde 3-phosphate: step 4/5. Catalyzes the reversible conversion of 2-phosphoglycerate (2-PG) into phosphoenolpyruvate (PEP). It is essential for the degradation of carbohydrates via glycolysis. In Erwinia tasmaniensis (strain DSM 17950 / CFBP 7177 / CIP 109463 / NCPPB 4357 / Et1/99), this protein is Enolase.